Consider the following 186-residue polypeptide: UPF0157 protein SCO7215 (186 aa).

Belongs to the UPF0157 (GrpB) family.

This Streptomyces coelicolor (strain ATCC BAA-471 / A3(2) / M145) protein is UPF0157 protein SCO7215.